The primary structure comprises 602 residues: Aspartate--tRNA(Asp/Asn) ligase (602 aa).

Glu176 is a binding site for L-aspartate. The segment at 200–203 (QQFK) is aspartate. L-aspartate is bound by residues Arg222 and His452. 222-224 (RDE) provides a ligand contact to ATP. Glu490 is a binding site for ATP. Arg497 serves as a coordination point for L-aspartate. 542–545 (GIDR) contacts ATP.

This sequence belongs to the class-II aminoacyl-tRNA synthetase family. Type 1 subfamily. Homodimer.

It localises to the cytoplasm. The enzyme catalyses tRNA(Asx) + L-aspartate + ATP = L-aspartyl-tRNA(Asx) + AMP + diphosphate. Its function is as follows. Aspartyl-tRNA synthetase with relaxed tRNA specificity since it is able to aspartylate not only its cognate tRNA(Asp) but also tRNA(Asn). Reaction proceeds in two steps: L-aspartate is first activated by ATP to form Asp-AMP and then transferred to the acceptor end of tRNA(Asp/Asn). The sequence is that of Aspartate--tRNA(Asp/Asn) ligase from Rickettsia africae (strain ESF-5).